The following is a 95-amino-acid chain: Aspartyl/glutamyl-tRNA(Asn/Gln) amidotransferase subunit C (95 aa).

Belongs to the GatC family. In terms of assembly, heterotrimer of A, B and C subunits.

The enzyme catalyses L-glutamyl-tRNA(Gln) + L-glutamine + ATP + H2O = L-glutaminyl-tRNA(Gln) + L-glutamate + ADP + phosphate + H(+). It carries out the reaction L-aspartyl-tRNA(Asn) + L-glutamine + ATP + H2O = L-asparaginyl-tRNA(Asn) + L-glutamate + ADP + phosphate + 2 H(+). Functionally, allows the formation of correctly charged Asn-tRNA(Asn) or Gln-tRNA(Gln) through the transamidation of misacylated Asp-tRNA(Asn) or Glu-tRNA(Gln) in organisms which lack either or both of asparaginyl-tRNA or glutaminyl-tRNA synthetases. The reaction takes place in the presence of glutamine and ATP through an activated phospho-Asp-tRNA(Asn) or phospho-Glu-tRNA(Gln). The polypeptide is Aspartyl/glutamyl-tRNA(Asn/Gln) amidotransferase subunit C (Pelobacter propionicus (strain DSM 2379 / NBRC 103807 / OttBd1)).